The primary structure comprises 190 residues: Large ribosomal subunit protein bL9 (190 aa).

Belongs to the bacterial ribosomal protein bL9 family.

Binds to the 23S rRNA. This chain is Large ribosomal subunit protein bL9, found in Methylobacterium radiotolerans (strain ATCC 27329 / DSM 1819 / JCM 2831 / NBRC 15690 / NCIMB 10815 / 0-1).